Here is a 126-residue protein sequence, read N- to C-terminus: Hydrogenase maturation factor HypA (126 aa).

His-2 is a Ni(2+) binding site. 4 residues coordinate Zn(2+): Cys-78, Cys-81, Cys-97, and Cys-100.

The protein belongs to the HypA/HybF family.

Involved in the maturation of [NiFe] hydrogenases. Required for nickel insertion into the metal center of the hydrogenase. This chain is Hydrogenase maturation factor HypA, found in Methanococcus maripaludis (strain C6 / ATCC BAA-1332).